Consider the following 458-residue polypeptide: Argininosuccinate lyase (458 aa).

It belongs to the lyase 1 family. Argininosuccinate lyase subfamily.

Its subcellular location is the cytoplasm. The enzyme catalyses 2-(N(omega)-L-arginino)succinate = fumarate + L-arginine. It participates in amino-acid biosynthesis; L-arginine biosynthesis; L-arginine from L-ornithine and carbamoyl phosphate: step 3/3. This Salmonella paratyphi A (strain ATCC 9150 / SARB42) protein is Argininosuccinate lyase.